The chain runs to 85 residues: Large ribosomal subunit protein bL27 (85 aa).

The interval 1 to 21 (MAHKKGVGSTRNGRDSDGQRL) is disordered.

The protein belongs to the bacterial ribosomal protein bL27 family.

In Geotalea uraniireducens (strain Rf4) (Geobacter uraniireducens), this protein is Large ribosomal subunit protein bL27.